A 351-amino-acid polypeptide reads, in one-letter code: DNA polymerase IV (351 aa).

The UmuC domain occupies 4–184 (FIHIDMDCFY…LPLGKIPGVG (181 aa)). Mg(2+)-binding residues include aspartate 8 and aspartate 102. Glutamate 103 is an active-site residue.

The protein belongs to the DNA polymerase type-Y family. Monomer. The cofactor is Mg(2+).

The protein localises to the cytoplasm. It carries out the reaction DNA(n) + a 2'-deoxyribonucleoside 5'-triphosphate = DNA(n+1) + diphosphate. Poorly processive, error-prone DNA polymerase involved in untargeted mutagenesis. Copies undamaged DNA at stalled replication forks, which arise in vivo from mismatched or misaligned primer ends. These misaligned primers can be extended by PolIV. Exhibits no 3'-5' exonuclease (proofreading) activity. May be involved in translesional synthesis, in conjunction with the beta clamp from PolIII. This is DNA polymerase IV from Pseudoalteromonas translucida (strain TAC 125).